The primary structure comprises 340 residues: Phosphoribosylformylglycinamidine cyclo-ligase (340 aa).

Belongs to the AIR synthase family.

The protein localises to the cytoplasm. It catalyses the reaction 2-formamido-N(1)-(5-O-phospho-beta-D-ribosyl)acetamidine + ATP = 5-amino-1-(5-phospho-beta-D-ribosyl)imidazole + ADP + phosphate + H(+). It functions in the pathway purine metabolism; IMP biosynthesis via de novo pathway; 5-amino-1-(5-phospho-D-ribosyl)imidazole from N(2)-formyl-N(1)-(5-phospho-D-ribosyl)glycinamide: step 2/2. This is Phosphoribosylformylglycinamidine cyclo-ligase from Streptococcus pyogenes serotype M3 (strain ATCC BAA-595 / MGAS315).